The sequence spans 102 residues: Large ribosomal subunit protein bL21 (102 aa).

The protein belongs to the bacterial ribosomal protein bL21 family. As to quaternary structure, part of the 50S ribosomal subunit. Contacts protein L20.

Functionally, this protein binds to 23S rRNA in the presence of protein L20. This chain is Large ribosomal subunit protein bL21, found in Campylobacter lari (strain RM2100 / D67 / ATCC BAA-1060).